A 315-amino-acid polypeptide reads, in one-letter code: Transaldolase (315 aa).

The active-site Schiff-base intermediate with substrate is the lysine 125.

It belongs to the transaldolase family. Type 1 subfamily. As to quaternary structure, homodimer.

It localises to the cytoplasm. The catalysed reaction is D-sedoheptulose 7-phosphate + D-glyceraldehyde 3-phosphate = D-erythrose 4-phosphate + beta-D-fructose 6-phosphate. It functions in the pathway carbohydrate degradation; pentose phosphate pathway; D-glyceraldehyde 3-phosphate and beta-D-fructose 6-phosphate from D-ribose 5-phosphate and D-xylulose 5-phosphate (non-oxidative stage): step 2/3. Functionally, transaldolase is important for the balance of metabolites in the pentose-phosphate pathway. This Polaromonas naphthalenivorans (strain CJ2) protein is Transaldolase.